A 163-amino-acid chain; its full sequence is Centrosomal protein of 19 kDa (163 aa).

The protein belongs to the CEP19 family. In terms of assembly, interacts with CEP43; this interaction is required for its localization to the mother centriole. Interacts (via residues 121-150) with RABL2B. Interacts (via C-terminus) with CEP350; this interaction is required for its localization to the mother centriole.

Its subcellular location is the cytoplasm. It localises to the cytoskeleton. It is found in the microtubule organizing center. The protein resides in the centrosome. The protein localises to the centriole. Its subcellular location is the spindle pole. It localises to the cilium basal body. In terms of biological role, required for ciliation. Recruits the RABL2B GTPase to the ciliary base to initiate ciliation. After specifically capturing the activated GTP-bound RABL2B, the CEP19-RABL2B complex binds intraflagellar transport (IFT) complex B from the large pool pre-docked at the base of the cilium and thus triggers its entry into the cilia. Involved in the early steps in cilia formation by recruiting the ciliary vesicles (CVs) to the distal end of the mother centriole where they fuse to initiate cilium assembly. Involved in microtubule (MT) anchoring to the centrosomes. In Homo sapiens (Human), this protein is Centrosomal protein of 19 kDa (CEP19).